The following is a 929-amino-acid chain: Thrombospondin-3b (929 aa).

The N-terminal stretch at 1 to 22 (MELRKIVPNLLVLYVAVHFSQS) is a signal peptide. In terms of domain architecture, Laminin G-like spans 24-192 (EIKVINVLEL…VESVKLALGG (169 aa)). N-linked (GlcNAc...) asparagine glycosylation occurs at asparagine 45. 18 disulfide bridges follow: cysteine 277/cysteine 288, cysteine 282/cysteine 299, cysteine 319/cysteine 343, cysteine 349/cysteine 362, cysteine 356/cysteine 371, cysteine 374/cysteine 386, cysteine 392/cysteine 406, cysteine 400/cysteine 416, cysteine 418/cysteine 429, cysteine 445/cysteine 452, cysteine 457/cysteine 477, cysteine 493/cysteine 513, cysteine 516/cysteine 536, cysteine 552/cysteine 572, cysteine 575/cysteine 595, cysteine 613/cysteine 633, cysteine 653/cysteine 673, and cysteine 689/cysteine 910. The 40-residue stretch at 345–384 (DIDECAELSGSCVPNSVCINTVGSFKCGQCKAGFVGNQTV) folds into the EGF-like 1; calcium-binding domain. Asparagine 381 is a glycosylation site (N-linked (GlcNAc...) asparagine). In terms of domain architecture, EGF-like 2 spans 388–430 (ARRTCETLGYSPCDVNSHCVMGRNSDVSCVCNVGWAGNGNICG). TSP type-3 repeat units follow at residues 431-465 (PDSD…NSGQ), 466-501 (EDTD…NKDQ), 502-524 (QNSD…NGDQ), 525-560 (LDTD…NPMQ), 561-583 (TDRD…DPLQ), 584-621 (SDMD…NSSQ), 622-661 (LDSD…NPSQ), and 662-697 (IDTD…EVTM). A compositionally biased stretch (basic and acidic residues) spans 602–613 (DGDGYQDTRDNC). The interval 602–651 (DGDGYQDTRDNCPEVPNSSQLDSDNDGIGDECDDDDDNDGIPDILPPGPD) is disordered. The N-linked (GlcNAc...) asparagine glycan is linked to asparagine 618. The span at 624-641 (SDNDGIGDECDDDDDNDG) shows a compositional bias: acidic residues. A TSP C-terminal domain is found at 701–915 (RAFQTVILDP…LGYRCNDSIP (215 aa)). A glycan (N-linked (GlcNAc...) asparagine) is linked at asparagine 911.

This sequence belongs to the thrombospondin family. As to quaternary structure, oligomer; disulfide-linked.

Its function is as follows. Adhesive glycoprotein that mediates cell-to-cell and cell-to-matrix interactions. Can bind to fibrinogen, fibronectin, laminin and type V collagen. The protein is Thrombospondin-3b of Danio rerio (Zebrafish).